Here is a 325-residue protein sequence, read N- to C-terminus: Brain mitochondrial carrier protein 1 (325 aa).

6 consecutive transmembrane segments (helical) span residues Gly-38–Ala-54, Leu-112–Leu-128, Leu-141–Pro-161, Gly-199–Leu-215, Val-240–Val-256, and Gly-298–Ile-315. Solcar repeat units lie at residues Lys-42–Leu-131, Glu-139–His-224, and Asp-233–Leu-323.

This sequence belongs to the mitochondrial carrier (TC 2.A.29) family. In terms of assembly, homotetramer. As to expression, mainly expressed in brain. Some expression in testis and pituitary.

The protein resides in the mitochondrion inner membrane. It carries out the reaction sulfite(in) + sulfate(out) = sulfite(out) + sulfate(in). The catalysed reaction is thiosulfate(in) + sulfate(out) = thiosulfate(out) + sulfate(in). It catalyses the reaction sulfate(out) + phosphate(in) = sulfate(in) + phosphate(out). The enzyme catalyses oxalate(in) + sulfate(out) = oxalate(out) + sulfate(in). It carries out the reaction malonate(in) + sulfate(out) = malonate(out) + sulfate(in). The catalysed reaction is maleate(in) + sulfate(out) = maleate(out) + sulfate(in). It catalyses the reaction (S)-malate(in) + sulfate(out) = (S)-malate(out) + sulfate(in). The enzyme catalyses (3S)-citramalate(in) + sulfate(out) = (3S)-citramalate(out) + sulfate(in). It carries out the reaction (3R)-citramalate(in) + sulfate(out) = (3R)-citramalate(out) + sulfate(in). The catalysed reaction is sulfate(out) + succinate(in) = sulfate(in) + succinate(out). It catalyses the reaction (S,S)-tartrate(in) + sulfate(out) = (S,S)-tartrate(out) + sulfate(in). The enzyme catalyses (2R,3R)-tartrate(in) + sulfate(out) = (2R,3R)-tartrate(out) + sulfate(in). It carries out the reaction D-aspartate(in) + sulfate(out) = D-aspartate(out) + sulfate(in). The catalysed reaction is L-aspartate(in) + sulfate(out) = L-aspartate(out) + sulfate(in). It catalyses the reaction sulfate(in) = sulfate(out). The enzyme catalyses phosphate(in) = phosphate(out). It carries out the reaction (S)-malate(out) = (S)-malate(in). The catalysed reaction is citrate(in) = citrate(out). It catalyses the reaction L-aspartate(out) = L-aspartate(in). The enzyme catalyses L-glutamate(out) = L-glutamate(in). It carries out the reaction H(+)(in) = H(+)(out). The catalysed reaction is chloride(in) = chloride(out). Increased activity at pH lower than 8.0. sulfate/sulfate exchange activity is inhibited strongly by pyridoxal 5'-phosphate, bathophenanthroline and the organic mercurials mersalyl, p-chloromercuribenzoate and HgCl2. Proton conductance is activated by cardiolipin and long-chain free fatty acids and inhibited by purine nucleotides ATP and ADP. Chloride ion transporter activity is inhibited by long-chain free fatty acids. Functionally, transports inorganic anions (sulfate, sulfite, thiosulfate and phosphate) and, to a lesser extent, a variety of dicarboxylates (e.g. malonate, malate and citramalate) and, even more so, aspartate and glutamate and tricarboxylates. May catalyze the export of sulfite and thiosulfate (the hydrogen sulfide degradation products) from the mitochondria, thereby modulating the level of the hydrogen sulfide. Also can mediate a very low unidirectional transport of anions including sulfate, phosphate, (S)-malate, citrate, L-aspartate and L-glutamate. Maintains oxidative balance (through uncoupling activities) and ATP production (by modifying mitochondrial membrane potential). Is able to transport protons across lipid membranes. Also exhibits transmembrane chloride transport activity to a lesser extent. May modify mitochondrial respiratory efficiency and mitochondrial oxidant production. The polypeptide is Brain mitochondrial carrier protein 1 (Homo sapiens (Human)).